The following is a 703-amino-acid chain: Lactococcin-G-processing and transport ATP-binding protein LagD (703 aa).

One can recognise a Peptidase C39 domain in the interval 7-132 (QQDEKDCGVA…KEWTGVLLFP (126 aa)). Residue C13 is part of the active site. The ABC transmembrane type-1 domain maps to 153-435 (PILIKQKSLF…IINLQVKMQK (283 aa)). 7 helical membrane passes run 162 to 182 (FITI…DNII), 189 to 209 (TLNI…LFEY), 224 to 244 (MSIM…FFAT), 267 to 287 (ATLS…TLAI), 291 to 311 (QLFL…YVFI), 381 to 401 (MVIE…YVID), and 409 to 429 (LITY…IINL). Positions 469–703 (IKLDKVSFSY…EGVYRRLLNA (235 aa)) constitute an ABC transporter domain. An ATP-binding site is contributed by 502-509 (GVSGSGKS).

It belongs to the ABC transporter superfamily. LagD family. In terms of assembly, homodimer.

The protein resides in the cell membrane. In terms of biological role, lagD (TC 3.A.1) is involved in processing the signal peptide and probably also in export of the bacteriocin lactococcin G. This chain is Lactococcin-G-processing and transport ATP-binding protein LagD (lagD), found in Lactococcus lactis subsp. lactis (Streptococcus lactis).